The chain runs to 142 residues: Conidial pigment biosynthesis dehydratase EthD (142 aa).

In terms of domain architecture, EthD spans 25 to 121 (PGMSEAAYRE…PDHQKFADTS (97 aa)).

Belongs to the tpcK family.

It functions in the pathway pigment biosynthesis. In terms of biological role, dehydratase; part of the Pks1 gene cluster that mediates the biosynthesis of an anthraquinone derivative pigment that contributes to conidial pigmentation that provides protection from UV radiation, heat and cold stress. The polyketide synthase Pks1 produces 1-acetyl-2,4,6,8-tetrahydroxy-9,10-anthraquinone though condensation of acetyl-CoA with malonyl-CoA. The dehydratase EthD and the laccase Mlac1 further convert the anthraquinone derivative into the final conidial pigment. The chain is Conidial pigment biosynthesis dehydratase EthD from Metarhizium robertsii (strain ARSEF 23 / ATCC MYA-3075) (Metarhizium anisopliae (strain ARSEF 23)).